The chain runs to 382 residues: Guanine nucleotide exchange factor for Rab-3A (382 aa).

Positions Met1 to Ala17 are enriched in pro residues. Positions Met1 to Asp60 are disordered. Over residues Gly45–Gln58 the composition is skewed to low complexity. A coiled-coil region spans residues Glu73–Val161. The interval Pro166–Thr198 is disordered. 2 positions are modified to phosphoserine: Ser168 and Ser179. Over residues Gly184–Ser194 the composition is skewed to basic residues.

The protein belongs to the SEC2 family. In terms of assembly, interacts with RAB3A and IHPK1 through the coiled-coil domain. This interaction is competitive. IHPK1 kinase activity is not required for this interaction.

Guanine nucleotide exchange factor (GEF) which may activate RAB3A, a GTPase that regulates synaptic vesicle exocytosis. Promotes the exchange of GDP to GTP, converting inactive GDP-bound Rab proteins into their active GTP-bound form. May also activate RAB8A and RAB8B. The polypeptide is Guanine nucleotide exchange factor for Rab-3A (RAB3IL1) (Homo sapiens (Human)).